The sequence spans 346 residues: MSDEYGPPERIIDAAGTGDEAALERALRPVSLDEYVGQTGVREQLEIFIRAARGRDEPLDHTLLFGPPGLGKTTLANIIATEMGASLRQSSGPVLDRPGDLAAILTNLEPGDVLFIDEIHRLSSVVEEVLYPAMEDFRIDIVIGEGPAARSIKLDLPPFTLVGATTRAGLLTSPLRDRFGIVQRLAYYPVDELTRIVQRSAGRLGVSTEAHGAAEIARRARGTPRVANRLLRRVRDFAEVRADGRITEQVAADAMELLDVDRNGLDEQDRRLLEAVVHKFGGGPVGLDNLATAIGEERGTLEDVVEPYLIQEGYLMRTPRGRVATEHAYTLLGVPGQAAGSGDLFG.

Positions 1 to 188 (MSDEYGPPER…FGIVQRLAYY (188 aa)) are large ATPase domain (RuvB-L). Residues L27, R28, G69, K72, T73, T74, 135–137 (EDF), R178, Y188, and R225 each bind ATP. T73 contacts Mg(2+). Residues 189 to 259 (PVDELTRIVQ…VAADAMELLD (71 aa)) form a small ATPAse domain (RuvB-S) region. The tract at residues 262–346 (RNGLDEQDRR…QAAGSGDLFG (85 aa)) is head domain (RuvB-H). Residues R298, R317, and R322 each contribute to the DNA site.

Belongs to the RuvB family. In terms of assembly, homohexamer. Forms an RuvA(8)-RuvB(12)-Holliday junction (HJ) complex. HJ DNA is sandwiched between 2 RuvA tetramers; dsDNA enters through RuvA and exits via RuvB. An RuvB hexamer assembles on each DNA strand where it exits the tetramer. Each RuvB hexamer is contacted by two RuvA subunits (via domain III) on 2 adjacent RuvB subunits; this complex drives branch migration. In the full resolvosome a probable DNA-RuvA(4)-RuvB(12)-RuvC(2) complex forms which resolves the HJ.

It is found in the cytoplasm. It carries out the reaction ATP + H2O = ADP + phosphate + H(+). In terms of biological role, the RuvA-RuvB-RuvC complex processes Holliday junction (HJ) DNA during genetic recombination and DNA repair, while the RuvA-RuvB complex plays an important role in the rescue of blocked DNA replication forks via replication fork reversal (RFR). RuvA specifically binds to HJ cruciform DNA, conferring on it an open structure. The RuvB hexamer acts as an ATP-dependent pump, pulling dsDNA into and through the RuvAB complex. RuvB forms 2 homohexamers on either side of HJ DNA bound by 1 or 2 RuvA tetramers; 4 subunits per hexamer contact DNA at a time. Coordinated motions by a converter formed by DNA-disengaged RuvB subunits stimulates ATP hydrolysis and nucleotide exchange. Immobilization of the converter enables RuvB to convert the ATP-contained energy into a lever motion, pulling 2 nucleotides of DNA out of the RuvA tetramer per ATP hydrolyzed, thus driving DNA branch migration. The RuvB motors rotate together with the DNA substrate, which together with the progressing nucleotide cycle form the mechanistic basis for DNA recombination by continuous HJ branch migration. Branch migration allows RuvC to scan DNA until it finds its consensus sequence, where it cleaves and resolves cruciform DNA. This chain is Holliday junction branch migration complex subunit RuvB, found in Halorhodospira halophila (strain DSM 244 / SL1) (Ectothiorhodospira halophila (strain DSM 244 / SL1)).